We begin with the raw amino-acid sequence, 90 residues long: Cell division topological specificity factor (90 aa).

This sequence belongs to the MinE family.

Functionally, prevents the cell division inhibition by proteins MinC and MinD at internal division sites while permitting inhibition at polar sites. This ensures cell division at the proper site by restricting the formation of a division septum at the midpoint of the long axis of the cell. The polypeptide is Cell division topological specificity factor (Lachnoclostridium phytofermentans (strain ATCC 700394 / DSM 18823 / ISDg) (Clostridium phytofermentans)).